Consider the following 669-residue polypeptide: Zinc finger CCCH domain-containing protein 17 (669 aa).

Residues 1–11 (MFAPATQPQQQ) are compositionally biased toward low complexity. Residues 1-23 (MFAPATQPQQQHEQKKQSETVSS) form a disordered region. 3 consecutive C3H1-type zinc fingers follow at residues 34–58 (DCVYFLASPLTCKKGPECEYRHSEY), 60–86 (RMNPRDCYYWLNGNCLNPKCGFRHPPL), and 114–141 (AKQPVPCLFFQKGMCMKGDMCSFLHTPN). Disordered stretches follow at residues 150–175 (PVEAKPATDPQCSKKPIENNTEEKKL), 285–306 (VEDRYGRRSQERGNSEYDPDFS), 376–589 (GMRL…VMEE), and 642–669 (EEGEEEATEGGEGEGEEDIEKKTVEMLS). 6 stretches are compositionally biased toward basic and acidic residues: residues 164–175 (KPIENNTEEKKL), 285–299 (VEDRYGRRSQERGNS), 392–406 (SMDRGYRESRRDTPR), 420–464 (KLRE…EENH), 478–499 (RRREMEDERKSAPKSSREESKP), and 547–579 (NNKDETISKEEAGDEIKLITEEKTEVVSEPKAE). Acidic residues-rich tracts occupy residues 580-589 (VEEEGTVMEE) and 642-659 (EEGEEEATEGGEGEGEED). Over residues 660 to 669 (IEKKTVEMLS) the composition is skewed to basic and acidic residues.

The polypeptide is Zinc finger CCCH domain-containing protein 17 (Arabidopsis thaliana (Mouse-ear cress)).